The primary structure comprises 322 residues: Short-chain dehydrogenase TIC 32, chloroplastic (322 aa).

NADP(+) is bound by residues 36 to 42 (GASSGIG), 88 to 89 (DL), Asn-115, and Thr-136. Substrate is bound at residue Ser-170. Residue Tyr-192 is the Proton acceptor of the active site. Positions 298–314 (DTELAKKVWDFSTKLTD) are interaction with calmodulin.

It belongs to the short-chain dehydrogenases/reductases (SDR) family. In terms of assembly, part of the Tic complex. Interacts with TIC110. Expressed in leaves and roots.

It localises to the plastid. It is found in the chloroplast inner membrane. Functionally, involved in protein precursor import into chloroplasts. Part of the redox regulon consisting of TIC32, TIC 55 and TIC62. The polypeptide is Short-chain dehydrogenase TIC 32, chloroplastic (Arabidopsis thaliana (Mouse-ear cress)).